The sequence spans 192 residues: NADH-ubiquinone oxidoreductase subunit 9 (192 aa).

This sequence belongs to the complex I 30 kDa subunit family. In terms of assembly, complex I is composed of about 30 different subunits.

It is found in the mitochondrion inner membrane. It carries out the reaction a ubiquinone + NADH + 5 H(+)(in) = a ubiquinol + NAD(+) + 4 H(+)(out). Its function is as follows. Core subunit of the mitochondrial membrane respiratory chain NADH dehydrogenase (Complex I) that is believed to belong to the minimal assembly required for catalysis. Complex I functions in the transfer of electrons from NADH to the respiratory chain. The immediate electron acceptor for the enzyme is believed to be ubiquinone. This is NADH-ubiquinone oxidoreductase subunit 9 (NAD9) from Prototheca wickerhamii.